A 316-amino-acid polypeptide reads, in one-letter code: Remorin 4.1 (316 aa).

Disordered stretches follow at residues 1 to 108 (MLSE…PSEL), 125 to 202 (NANA…SVGQ), and 267 to 287 (AQNE…SAEA). Acidic residues predominate over residues 40–53 (EREEEVVVEEELEE). Polar residues predominate over residues 92–104 (RHTSIRSVGSDTA). Residues 125 to 135 (NANAAAAAAAN) are compositionally biased toward low complexity. Composition is skewed to basic and acidic residues over residues 143 to 153 (GVDDALGRIGE) and 277 to 287 (KAEEKRASAEA). Residues 242-288 (VEKANAWLKKYERKLEEKRAKAMEKAQNEVAKARRKAEEKRASAEAK) are a coiled coil.

This sequence belongs to the remorin family. As to quaternary structure, interacts with BAK1. Phosphorylated by BRI1. Phosphorylation reduces the binding affinity to BAK1. As to expression, expressed in roots, leaf blades and leaf sheaths. Expressed at low levels in stems and spikelets.

It localises to the cell membrane. Functions in abscisic acid (ABA) signaling downstream of BZIP23. Acts as antagonistic and negative regulator of brassinosteroid (BR) signaling. Binds to BAK1 and inhibits its interaction with the BR receptor BRI1. Inhibits the formation and subsequent activation of the BRI1-BAK1 receptor complex. This is Remorin 4.1 from Oryza sativa subsp. japonica (Rice).